We begin with the raw amino-acid sequence, 469 residues long: 3-isopropylmalate dehydratase large subunit (469 aa).

The [4Fe-4S] cluster site is built by Cys349, Cys410, and Cys413.

This sequence belongs to the aconitase/IPM isomerase family. LeuC type 1 subfamily. Heterodimer of LeuC and LeuD. The cofactor is [4Fe-4S] cluster.

It carries out the reaction (2R,3S)-3-isopropylmalate = (2S)-2-isopropylmalate. Its pathway is amino-acid biosynthesis; L-leucine biosynthesis; L-leucine from 3-methyl-2-oxobutanoate: step 2/4. Its function is as follows. Catalyzes the isomerization between 2-isopropylmalate and 3-isopropylmalate, via the formation of 2-isopropylmaleate. This is 3-isopropylmalate dehydratase large subunit from Neisseria gonorrhoeae (strain ATCC 700825 / FA 1090).